Here is a 430-residue protein sequence, read N- to C-terminus: MSHLDVFRKFTDDQGNYNKELVNDTHGLLSLYEAAQFRVHDEEILDEAINFTTTHLKLLLPKLSNSLSMQVSYALKYPINKTIARVATRKYISFYQEEESSCDQVLINFAKLDFSILQKMHKRELCDITRWWKELDLANELAFARDRVVELYFWCLGVYFEPQYKVARNILTKVLCFVSITDDIYDTYGTLHELTLLTNAIERWNLDATENLTSYMKLFYTGLLHFYNEVEKELEKENKSFRVNFAISEMKKLVRAYFQEAKWYHGNTVPKMEEEYMKNGIQSSANPTLATASWLGMGDEATKEAFEWISTEPPILVASSNIARLLNDIVSHEREIERGDVASSIECYMNEYGATKEEAYMEIRKIIENNWKDLNRGCLKPTTVPRVLLMPVLNLTRVAEFVYKDEDAYTFSKNNLKEVISMVLDDPIEE.

Mg(2+) is bound by residues aspartate 182, aspartate 186, and glutamate 335. Residues 182–186 (DDIYD) carry the DDXXD motif motif.

This sequence belongs to the terpene synthase family. Tpsa subfamily. Mg(2+) serves as cofactor. It depends on Mn(2+) as a cofactor.

The protein operates within secondary metabolite biosynthesis; terpenoid biosynthesis. Sesquiterpene synthase involved in the biosynthesis of volatile compounds. No activity detected with geranyl diphosphate (GPP) and farnesyl diphosphate (FPP) as substrates. The polypeptide is Sesquiterpene synthase 15 (Solanum lycopersicum (Tomato)).